We begin with the raw amino-acid sequence, 153 residues long: SsrA-binding protein (153 aa).

Residues 129-153 (KREDMKKKDQSREMAQALRERSKSH) are disordered.

The protein belongs to the SmpB family.

Its subcellular location is the cytoplasm. Its function is as follows. Required for rescue of stalled ribosomes mediated by trans-translation. Binds to transfer-messenger RNA (tmRNA), required for stable association of tmRNA with ribosomes. tmRNA and SmpB together mimic tRNA shape, replacing the anticodon stem-loop with SmpB. tmRNA is encoded by the ssrA gene; the 2 termini fold to resemble tRNA(Ala) and it encodes a 'tag peptide', a short internal open reading frame. During trans-translation Ala-aminoacylated tmRNA acts like a tRNA, entering the A-site of stalled ribosomes, displacing the stalled mRNA. The ribosome then switches to translate the ORF on the tmRNA; the nascent peptide is terminated with the 'tag peptide' encoded by the tmRNA and targeted for degradation. The ribosome is freed to recommence translation, which seems to be the essential function of trans-translation. This is SsrA-binding protein from Geobacter metallireducens (strain ATCC 53774 / DSM 7210 / GS-15).